The primary structure comprises 485 residues: Adenosylhomocysteinase (485 aa).

Residues threonine 60, aspartate 146, and glutamate 208 each coordinate substrate. Residue 209-211 coordinates NAD(+); the sequence is TTT. Residues lysine 238 and aspartate 242 each coordinate substrate. Residues asparagine 243, 272-277, glutamate 295, asparagine 330, 351-353, and asparagine 399 each bind NAD(+); these read GYGDVG and IGH.

This sequence belongs to the adenosylhomocysteinase family. It depends on NAD(+) as a cofactor.

Its subcellular location is the cytoplasm. The enzyme catalyses S-adenosyl-L-homocysteine + H2O = L-homocysteine + adenosine. The protein operates within amino-acid biosynthesis; L-homocysteine biosynthesis; L-homocysteine from S-adenosyl-L-homocysteine: step 1/1. In terms of biological role, may play a key role in the regulation of the intracellular concentration of adenosylhomocysteine. This chain is Adenosylhomocysteinase, found in Streptomyces coelicolor (strain ATCC BAA-471 / A3(2) / M145).